The primary structure comprises 274 residues: Endonuclease 8-like L720 (274 aa).

The FPG-type; degenerate zinc finger occupies 241-274; the sequence is RIYRKSLCPLGHKTIRKKIGLRNRMTTWCPVCQL.

This sequence belongs to the FPG family.

This chain is Endonuclease 8-like L720, found in Acanthamoeba polyphaga mimivirus (APMV).